Here is a 141-residue protein sequence, read N- to C-terminus: Ubiquitin-like protein ATG12 (141 aa).

Residues 1 to 53 (MSEDSEVVLQLPSAPVGAGGESLPELSPETATPEPPSSAAVSPGTEEPPGDTK) form a disordered region. A compositionally biased stretch (low complexity) spans 23-40 (LPELSPETATPEPPSSAA). Residue Gly141 forms a Glycyl lysine isopeptide (Gly-Lys) (interchain with K-? in acceptor protein) linkage.

Belongs to the ATG12 family. Forms a conjugate with ATG5. Part of the minor complex composed of 4 sets of ATG12-ATG5 and ATG16L1 (400 kDa); this complex interacts with ATG3 leading to disruption of ATG7 interaction and promotion of ATG8-like proteins lipidation. Forms an 800-kDa complex composed of ATG12-ATG5 and ATG16L2. Interacts with DHX58/RIG-1, IFIH1/MDA5 and MAVS/IPS-1 in monomeric form as well as in ATG12-ATG5 conjugate. The interaction with MAVS is further enhanced upon vesicular stomatitis virus (VSV) infection. Interacts with ATG3; this interaction is essential for phosphatidylethanolamine (PE)-conjugated ATG8-like proteins formation. Interacts with ATG7. Interacts with ATG10. The ATG12-ATG5 conjugate interacts with RAB33A; this interaction is bridged by ATG16L1 and promotes ATG12-ATG5-ATG16L1 complex recruitment to phagophores. Interacts with TECPR1. Interacts with SH3BGRL. The ATG12-ATG5 conjugate interacts with PDCD6IP (via the BRO1 domain); this interaction is bridged by ATG12 and promotes multiple PDCD6IP-mediated functions such as endolysosomal trafficking, macroautophagy and exosome biogenesis. Acetylated by EP300. Ubiquitous.

Its subcellular location is the cytoplasm. The protein resides in the preautophagosomal structure membrane. Functionally, ubiquitin-like protein involved in autophagy vesicles formation. Conjugation with ATG5 through a ubiquitin-like conjugating system involving also ATG7 as an E1-like activating enzyme and ATG10 as an E2-like conjugating enzyme, is essential for its function. The ATG12-ATG5 conjugate acts as an E3-like enzyme which is required for lipidation of ATG8 family proteins and their association to the vesicle membranes. As part of the ATG8 conjugation system with ATG5 and ATG16L1, required for recruitment of LRRK2 to stressed lysosomes and induction of LRRK2 kinase activity in response to lysosomal stress. (Microbial infection) May act as a proviral factor. In association with ATG5, negatively regulates the innate antiviral immune response by impairing the type I IFN production pathway upon vesicular stomatitis virus (VSV) infection. The chain is Ubiquitin-like protein ATG12 from Mus musculus (Mouse).